The chain runs to 468 residues: Na(+)/H(+) antiporter NhaA 2 (468 aa).

A run of 11 helical transmembrane segments spans residues 31-51 (FLHVQAASGIVLLIATAVALA), 82-102 (LHFWINDGLMTIFFFVVGLEI), 118-138 (VLPVAAALGGMLFPALIYLAL), 147-167 (GWGVPMATDIAFAVGALALLG), 176-196 (VLLLALAIIDDIGAILVIAVF), 199-219 (SSISVTGFGLVAVGIAGVLAL), 226-246 (SPVVYAAAGVVIWAGLLSAGV), 321-341 (PWVAYGIMPLFALANAGVSLG), 353-373 (LLLGVVFGLTMGKPLGIMVAC), 393-413 (VLVVGCVAGIGFTMAIFVAGL), and 422-442 (GVAKLAVLLGSLISALVAMAV).

Belongs to the NhaA Na(+)/H(+) (TC 2.A.33) antiporter family.

It localises to the cell inner membrane. It carries out the reaction Na(+)(in) + 2 H(+)(out) = Na(+)(out) + 2 H(+)(in). Its function is as follows. Na(+)/H(+) antiporter that extrudes sodium in exchange for external protons. This is Na(+)/H(+) antiporter NhaA 2 from Sorangium cellulosum (strain So ce56) (Polyangium cellulosum (strain So ce56)).